We begin with the raw amino-acid sequence, 34 residues long: N(4)-(Beta-N-acetylglucosaminyl)-L-asparaginase (34 aa).

Threonine 18 functions as the Nucleophile in the catalytic mechanism.

This sequence belongs to the Ntn-hydrolase family. In terms of assembly, heterotetramer of two alpha and two beta chains arranged as a dimer of alpha/beta heterodimers. Cleaved into an alpha and beta chain by autocatalysis; this activates the enzyme. The N-terminal residue of the beta subunit is responsible for the nucleophile hydrolase activity. Post-translationally, N-glycosylated.

It is found in the lysosome. The enzyme catalyses N(4)-(beta-N-acetyl-D-glucosaminyl)-L-asparagine + H2O = N-acetyl-beta-D-glucosaminylamine + L-aspartate + H(+). Functionally, cleaves the GlcNAc-Asn bond which joins oligosaccharides to the peptide of asparagine-linked glycoproteins. This chain is N(4)-(Beta-N-acetylglucosaminyl)-L-asparaginase (AGA), found in Sus scrofa (Pig).